We begin with the raw amino-acid sequence, 151 residues long: Deoxyuridine 5'-triphosphate nucleotidohydrolase (151 aa).

Residues 70–72, N83, 87–89, and M97 contribute to the substrate site; these read RSG and LID.

It belongs to the dUTPase family. Mg(2+) serves as cofactor.

It catalyses the reaction dUTP + H2O = dUMP + diphosphate + H(+). The protein operates within pyrimidine metabolism; dUMP biosynthesis; dUMP from dCTP (dUTP route): step 2/2. Its function is as follows. This enzyme is involved in nucleotide metabolism: it produces dUMP, the immediate precursor of thymidine nucleotides and it decreases the intracellular concentration of dUTP so that uracil cannot be incorporated into DNA. This chain is Deoxyuridine 5'-triphosphate nucleotidohydrolase, found in Shigella sonnei (strain Ss046).